Reading from the N-terminus, the 42-residue chain is uncharacterized protein (42 aa).

This is an uncharacterized protein from Pasteurella multocida (strain Pm70).